Consider the following 116-residue polypeptide: MSVESFTPTALEFTPNAAHKVKTLVDEEGNDRLKLRVFVTGGGCSGFQYGFTFDEDVADDDTIVEREGVSLVVDPMSFQYLAGAEVDYQEGLEGSRFVIKNPNASTTCGCGSSFSI.

The iron-sulfur cluster site is built by Cys44, Cys108, and Cys110.

The protein belongs to the HesB/IscA family. Homodimer. Iron-sulfur cluster serves as cofactor.

Its function is as follows. Required for insertion of 4Fe-4S clusters for at least IspG. The protein is Iron-sulfur cluster insertion protein ErpA of Pseudomonas syringae pv. syringae (strain B728a).